The primary structure comprises 235 residues: Octanoyltransferase (235 aa).

The 185-residue stretch at 30–214 (NELEDTLLLL…YFGKVFGAKF (185 aa)) folds into the BPL/LPL catalytic domain. Substrate is bound by residues 75–82 (RGGDVTYH), 144–146 (AIG), and 157–159 (GFA). The Acyl-thioester intermediate role is filled by Cys175.

Belongs to the LipB family.

Its subcellular location is the cytoplasm. It catalyses the reaction octanoyl-[ACP] + L-lysyl-[protein] = N(6)-octanoyl-L-lysyl-[protein] + holo-[ACP] + H(+). The protein operates within protein modification; protein lipoylation via endogenous pathway; protein N(6)-(lipoyl)lysine from octanoyl-[acyl-carrier-protein]: step 1/2. Its function is as follows. Catalyzes the transfer of endogenously produced octanoic acid from octanoyl-acyl-carrier-protein onto the lipoyl domains of lipoate-dependent enzymes. Lipoyl-ACP can also act as a substrate although octanoyl-ACP is likely to be the physiological substrate. The chain is Octanoyltransferase from Caldicellulosiruptor saccharolyticus (strain ATCC 43494 / DSM 8903 / Tp8T 6331).